Reading from the N-terminus, the 379-residue chain is Cytokine receptor common subunit gamma (379 aa).

The signal sequence occupies residues 1 to 22 (MLKPPLPLRSLLFLQLPLLGVG). Over 23 to 269 (LNPKFLTPSG…ENIENPENPS (247 aa)) the chain is Extracellular. Residues Cys-68 and Cys-78 are joined by a disulfide bond. Residues Asn-77, Asn-81, and Asn-90 are each glycosylated (N-linked (GlcNAc...) asparagine). The cysteines at positions 109 and 122 are disulfide-linked. In terms of domain architecture, Fibronectin type-III spans 163–260 (APENLTLRNL…IHWGSNTSKE (98 aa)). N-linked (GlcNAc...) asparagine glycosylation is found at Asn-166 and Asn-171. Residues 244 to 248 (WSDWS) carry the WSXWS motif motif. Residues 270 to 290 (LFALEAVLIPLGSMGLIVSLI) form a helical membrane-spanning segment. At 291 to 379 (CVYCWLERTM…PPCYTLKPEP (89 aa)) the chain is on the cytoplasmic side. The Box 1 motif signature appears at 299–307 (TMPRIPTLK). A Phosphothreonine modification is found at Thr-305. The segment at 349 to 370 (PPKGGEGPGGSPCSQHSPYWAP) is disordered.

Belongs to the type I cytokine receptor family. Type 5 subfamily. In terms of assembly, the gamma subunit is common to the IL2, IL4, IL7, IL15, IL21 and probably also the IL13 receptors. Interacts with SHB upon interleukin stimulation.

The protein localises to the cell membrane. Its subcellular location is the cell surface. Functionally, common subunit for the receptors for a variety of interleukins. Probably in association with IL15RA, involved in the stimulation of neutrophil phagocytosis by IL15. The polypeptide is Cytokine receptor common subunit gamma (IL2RG) (Bos taurus (Bovine)).